The sequence spans 185 residues: MTDLLLSSLVIAVGLAMDSFSVSLAGGAALKDNIVKTAVTAGIFFGFFQFAMPLLGWGIGVPITQVIDPFGYWIVVGLFFFIGGKMIWDSFSGDEEGISLIGWKVLLLLAVATSIDALAVGISFALIGEAVLLPAVIIGVVAFLFSFFGVLAGHKLSSILGNKMQILGGVILVLIGIKFLIEYCL.

6 helical membrane passes run 4-24, 43-63, 67-87, 107-127, 131-151, and 165-185; these read LLLSSLVIAVGLAMDSFSVSL, IFFGFFQFAMPLLGWGIGVPI, IDPFGYWIVVGLFFFIGGKMI, LLLAVATSIDALAVGISFALI, VLLPAVIIGVVAFLFSFFGVL, and QILGGVILVLIGIKFLIEYCL.

The protein belongs to the MntP (TC 9.B.29) family.

It is found in the cell membrane. Probably functions as a manganese efflux pump. The chain is Putative manganese efflux pump MntP from Methanocorpusculum labreanum (strain ATCC 43576 / DSM 4855 / Z).